A 357-amino-acid chain; its full sequence is Glutamine synthetase root isozyme A (357 aa).

Positions 19–99 constitute a GS beta-grasp domain; the sequence is IIAEYIWVGG…VICDVYTPAG (81 aa). The 252-residue stretch at 106–357 folds into the GS catalytic domain; that stretch reads KRYNAAKIFS…AETTILWKKP (252 aa).

It belongs to the glutamine synthetase family. As to quaternary structure, homooctamer.

The protein resides in the cytoplasm. The enzyme catalyses L-glutamate + NH4(+) + ATP = L-glutamine + ADP + phosphate + H(+). In Pisum sativum (Garden pea), this protein is Glutamine synthetase root isozyme A (GS3A).